The sequence spans 87 residues: Small ribosomal subunit protein eS21 (87 aa).

This sequence belongs to the eukaryotic ribosomal protein eS21 family. As to quaternary structure, component of the small ribosomal subunit. Mature ribosomes consist of a small (40S) and a large (60S) subunit. The 40S subunit contains about 33 different proteins and 1 molecule of RNA (18S). The 60S subunit contains about 49 different proteins and 3 molecules of RNA (25S, 5.8S and 5S).

It is found in the cytoplasm. Functionally, required for the processing of the 20S rRNA-precursor to mature 18S rRNA in a late step of the maturation of 40S ribosomal subunits. Has a physiological role leading to 18S rRNA stability. The polypeptide is Small ribosomal subunit protein eS21 (RPS21) (Eremothecium gossypii (strain ATCC 10895 / CBS 109.51 / FGSC 9923 / NRRL Y-1056) (Yeast)).